Consider the following 341-residue polypeptide: UDP-3-O-acylglucosamine N-acyltransferase 2 (341 aa).

His254 (proton acceptor) is an active-site residue.

Belongs to the transferase hexapeptide repeat family. LpxD subfamily. Homotrimer.

It catalyses the reaction a UDP-3-O-[(3R)-3-hydroxyacyl]-alpha-D-glucosamine + a (3R)-hydroxyacyl-[ACP] = a UDP-2-N,3-O-bis[(3R)-3-hydroxyacyl]-alpha-D-glucosamine + holo-[ACP] + H(+). The protein operates within bacterial outer membrane biogenesis; LPS lipid A biosynthesis. Functionally, catalyzes the N-acylation of UDP-3-O-acylglucosamine using 3-hydroxyacyl-ACP as the acyl donor. Is involved in the biosynthesis of lipid A, a phosphorylated glycolipid that anchors the lipopolysaccharide to the outer membrane of the cell. This is UDP-3-O-acylglucosamine N-acyltransferase 2 from Nitrobacter winogradskyi (strain ATCC 25391 / DSM 10237 / CIP 104748 / NCIMB 11846 / Nb-255).